We begin with the raw amino-acid sequence, 124 residues long: UPF0102 protein Msil_0293 (124 aa).

Belongs to the UPF0102 family.

The chain is UPF0102 protein Msil_0293 from Methylocella silvestris (strain DSM 15510 / CIP 108128 / LMG 27833 / NCIMB 13906 / BL2).